The sequence spans 317 residues: Acetyl-coenzyme A carboxylase carboxyl transferase subunit alpha (317 aa).

The region spanning 40–293 (LEGRVRDAMV…ETVIGDALKE (254 aa)) is the CoA carboxyltransferase C-terminal domain.

This sequence belongs to the AccA family. As to quaternary structure, acetyl-CoA carboxylase is a heterohexamer composed of biotin carboxyl carrier protein (AccB), biotin carboxylase (AccC) and two subunits each of ACCase subunit alpha (AccA) and ACCase subunit beta (AccD).

Its subcellular location is the cytoplasm. It catalyses the reaction N(6)-carboxybiotinyl-L-lysyl-[protein] + acetyl-CoA = N(6)-biotinyl-L-lysyl-[protein] + malonyl-CoA. It participates in lipid metabolism; malonyl-CoA biosynthesis; malonyl-CoA from acetyl-CoA: step 1/1. In terms of biological role, component of the acetyl coenzyme A carboxylase (ACC) complex. First, biotin carboxylase catalyzes the carboxylation of biotin on its carrier protein (BCCP) and then the CO(2) group is transferred by the carboxyltransferase to acetyl-CoA to form malonyl-CoA. This Rhizobium meliloti (strain 1021) (Ensifer meliloti) protein is Acetyl-coenzyme A carboxylase carboxyl transferase subunit alpha.